The chain runs to 132 residues: DNA-directed RNA polymerase subunit omega (132 aa).

Residues 90 to 109 (SSEAGGVLGTSSEEEGSSFD) form a disordered region.

It belongs to the RNA polymerase subunit omega family. In terms of assembly, the RNAP catalytic core consists of 2 alpha, 1 beta, 1 beta' and 1 omega subunit. When a sigma factor is associated with the core the holoenzyme is formed, which can initiate transcription.

The enzyme catalyses RNA(n) + a ribonucleoside 5'-triphosphate = RNA(n+1) + diphosphate. In terms of biological role, promotes RNA polymerase assembly. Latches the N- and C-terminal regions of the beta' subunit thereby facilitating its interaction with the beta and alpha subunits. In Bartonella henselae (strain ATCC 49882 / DSM 28221 / CCUG 30454 / Houston 1) (Rochalimaea henselae), this protein is DNA-directed RNA polymerase subunit omega.